We begin with the raw amino-acid sequence, 384 residues long: 2-deoxy-scyllo-inosose synthase (384 aa).

NAD(+) is bound by residues D42, 73-76 (EVHK), 105-109 (GITGN), 129-130 (TT), 140-142 (SLK), and 151-152 (KN). The active site involves K142. Position 184 (E184) interacts with Co(2+). E244 is a catalytic residue. 2 residues coordinate Co(2+): H247 and H263.

This sequence belongs to the sugar phosphate cyclases superfamily. DOI synthase family. NAD(+) is required as a cofactor. The cofactor is Co(2+).

It catalyses the reaction D-glucose 6-phosphate = 2-deoxy-L-scyllo-inosose + phosphate. Its pathway is metabolic intermediate biosynthesis; 2-deoxystreptamine biosynthesis; 2-deoxystreptamine from D-glucose 6-phosphate: step 1/4. It participates in antibiotic biosynthesis; lividomycin biosynthesis. Its function is as follows. Catalyzes the intramolecular carbocycle formation from D-glucose-6-phosphate to 2-deoxy-scyllo-inosose (DOI). This Streptomyces lividus protein is 2-deoxy-scyllo-inosose synthase (livC).